Reading from the N-terminus, the 345-residue chain is Glycerol-3-phosphate dehydrogenase [NAD(P)+] (345 aa).

NADPH is bound by residues Ser23, Tyr24, His44, and Lys118. Residues Lys118, Gly147, and Thr149 each coordinate sn-glycerol 3-phosphate. Ala151 is a binding site for NADPH. Sn-glycerol 3-phosphate-binding residues include Lys203, Asp256, Ser266, Arg267, and Asn268. Lys203 functions as the Proton acceptor in the catalytic mechanism. Arg267 is an NADPH binding site. Val291 and Glu293 together coordinate NADPH.

It belongs to the NAD-dependent glycerol-3-phosphate dehydrogenase family.

It localises to the cytoplasm. It catalyses the reaction sn-glycerol 3-phosphate + NAD(+) = dihydroxyacetone phosphate + NADH + H(+). The catalysed reaction is sn-glycerol 3-phosphate + NADP(+) = dihydroxyacetone phosphate + NADPH + H(+). It participates in membrane lipid metabolism; glycerophospholipid metabolism. In terms of biological role, catalyzes the reduction of the glycolytic intermediate dihydroxyacetone phosphate (DHAP) to sn-glycerol 3-phosphate (G3P), the key precursor for phospholipid synthesis. The sequence is that of Glycerol-3-phosphate dehydrogenase [NAD(P)+] from Vibrio parahaemolyticus serotype O3:K6 (strain RIMD 2210633).